The following is a 96-amino-acid chain: UPF0235 protein Spro_4033 (96 aa).

This sequence belongs to the UPF0235 family.

The protein is UPF0235 protein Spro_4033 of Serratia proteamaculans (strain 568).